The sequence spans 40 residues: Photosystem II reaction center protein J (40 aa).

Residues 8–28 (IPLWLIGTVTGILVIGLLGIF) form a helical membrane-spanning segment.

The protein belongs to the PsbJ family. As to quaternary structure, PSII is composed of 1 copy each of membrane proteins PsbA, PsbB, PsbC, PsbD, PsbE, PsbF, PsbH, PsbI, PsbJ, PsbK, PsbL, PsbM, PsbT, PsbX, PsbY, PsbZ, Psb30/Ycf12, at least 3 peripheral proteins of the oxygen-evolving complex and a large number of cofactors. It forms dimeric complexes.

It is found in the plastid. It localises to the chloroplast thylakoid membrane. Its function is as follows. One of the components of the core complex of photosystem II (PSII). PSII is a light-driven water:plastoquinone oxidoreductase that uses light energy to abstract electrons from H(2)O, generating O(2) and a proton gradient subsequently used for ATP formation. It consists of a core antenna complex that captures photons, and an electron transfer chain that converts photonic excitation into a charge separation. This Angiopteris evecta (Mule's foot fern) protein is Photosystem II reaction center protein J.